Consider the following 623-residue polypeptide: Serine/threonine-protein kinase ArnS (623 aa).

The next 2 membrane-spanning stretches (helical) occupy residues 13-33 (MILI…GIVL) and 49-69 (VYLI…QSLI). Residues 317-623 (YRVIEVIGLG…SYDIVKILEG (307 aa)) form the Protein kinase domain. ATP contacts are provided by residues 323–331 (IGLGGNGYV) and K344. Residue D460 is the Proton acceptor of the active site.

Belongs to the protein kinase superfamily. Ser/Thr protein kinase family. Post-translationally, autophosphorylated.

It localises to the cell membrane. The catalysed reaction is L-seryl-[protein] + ATP = O-phospho-L-seryl-[protein] + ADP + H(+). The enzyme catalyses L-threonyl-[protein] + ATP = O-phospho-L-threonyl-[protein] + ADP + H(+). Autophosphorylation is stimulated by Mn(2+). Plays an essential role in the controlled expression of archaellum components during starvation-induced motility. May inhibit arnR transcription and promote ArnR translation. The sequence is that of Serine/threonine-protein kinase ArnS from Sulfolobus acidocaldarius (strain ATCC 33909 / DSM 639 / JCM 8929 / NBRC 15157 / NCIMB 11770).